The chain runs to 175 residues: ATP synthase subunit delta (175 aa).

This sequence belongs to the ATPase delta chain family. In terms of assembly, F-type ATPases have 2 components, F(1) - the catalytic core - and F(0) - the membrane proton channel. F(1) has five subunits: alpha(3), beta(3), gamma(1), delta(1), epsilon(1). F(0) has three main subunits: a(1), b(2) and c(10-14). The alpha and beta chains form an alternating ring which encloses part of the gamma chain. F(1) is attached to F(0) by a central stalk formed by the gamma and epsilon chains, while a peripheral stalk is formed by the delta and b chains.

The protein resides in the cell membrane. Functionally, f(1)F(0) ATP synthase produces ATP from ADP in the presence of a proton or sodium gradient. F-type ATPases consist of two structural domains, F(1) containing the extramembraneous catalytic core and F(0) containing the membrane proton channel, linked together by a central stalk and a peripheral stalk. During catalysis, ATP synthesis in the catalytic domain of F(1) is coupled via a rotary mechanism of the central stalk subunits to proton translocation. In terms of biological role, this protein is part of the stalk that links CF(0) to CF(1). It either transmits conformational changes from CF(0) to CF(1) or is implicated in proton conduction. The protein is ATP synthase subunit delta of Stenotrophomonas maltophilia (strain K279a).